Reading from the N-terminus, the 299-residue chain is Acarbose 7(IV)-phosphotransferase (299 aa).

It belongs to the carbohydrate kinase PfkB family.

It catalyses the reaction acarbose + ATP = acarbose 7(IV)-phosphate + ADP + H(+). Its function is as follows. Catalyzes the phosphorylation of the alpha-glucosidase inhibitor acarbose. Phosphorylation of acarbose could be a resistance-like self-protection mechanism. The polypeptide is Acarbose 7(IV)-phosphotransferase (Actinoplanes sp. (strain ATCC 31044 / CBS 674.73 / SE50/110)).